The sequence spans 122 residues: Putative iron-sulfur cluster insertion protein ErpA (122 aa).

Cys50, Cys114, and Cys116 together coordinate iron-sulfur cluster.

This sequence belongs to the HesB/IscA family. Homodimer. The cofactor is iron-sulfur cluster.

Its function is as follows. Required for insertion of 4Fe-4S clusters. The polypeptide is Putative iron-sulfur cluster insertion protein ErpA (Cupriavidus necator (strain ATCC 17699 / DSM 428 / KCTC 22496 / NCIMB 10442 / H16 / Stanier 337) (Ralstonia eutropha)).